A 902-amino-acid polypeptide reads, in one-letter code: Transcription factor E2F7 (902 aa).

Serine 96 is modified (phosphoserine). Residues 143-212 mediate DNA binding; the sequence is RKQKSLGLLC…VAKNQYGWHG (70 aa). A compositionally biased stretch (basic and acidic residues) spans 253-269; that stretch reads ERRKDGSPDPRDQHLLD. Residues 253–283 form a disordered region; sequence ERRKDGSPDPRDQHLLDFSESDYPSSSANSR. A DNA-binding region spans residues 283–368; sequence RKDKSLRIMS…GRKPAFKWIG (86 aa). Position 411 is a phosphoserine (serine 411). Disordered stretches follow at residues 418–439, 589–627, and 665–690; these read SEKI…KQGP, LCEE…SNST, and NGFI…DNEI. 2 stretches are compositionally biased toward basic and acidic residues: residues 589-611 and 679-690; these read LCEE…REFE and PDTEKSSNDNEI. Position 832 is a phosphoserine (serine 832). The tract at residues 844 to 902 is disordered; sequence KAEQSPAPATPKSIQRRHRETFFKTPGSLGDPAFRRERNQSRNTSSAQRRLEISSSGPD. Residues 884–902 show a composition bias toward polar residues; sequence SRNTSSAQRRLEISSSGPD.

This sequence belongs to the E2F/DP family. Homodimer and heterodimer: mainly forms homodimers and, to a lesser extent, heterodimers with E2F8. Dimerization is important for DNA-binding. Interacts with HIF1A. Interacts with MN1.

The protein resides in the nucleus. Its function is as follows. Atypical E2F transcription factor that participates in various processes such as angiogenesis, polyploidization of specialized cells and DNA damage response. Mainly acts as a transcription repressor that binds DNA independently of DP proteins and specifically recognizes the E2 recognition site 5'-TTTC[CG]CGC-3'. Directly represses transcription of classical E2F transcription factors such as E2F1. Acts as a regulator of S-phase by recognizing and binding the E2-related site 5'-TTCCCGCC-3' and mediating repression of G1/S-regulated genes. Plays a key role in polyploidization of cells in placenta and liver by regulating the endocycle, probably by repressing genes promoting cytokinesis and antagonizing action of classical E2F proteins (E2F1, E2F2 and/or E2F3). Required for placental development by promoting polyploidization of trophoblast giant cells. Also involved in DNA damage response: up-regulated by p53/TP53 following genotoxic stress and acts as a downstream effector of p53/TP53-dependent repression by mediating repression of indirect p53/TP53 target genes involved in DNA replication. Acts as a promoter of sprouting angiogenesis, possibly by acting as a transcription activator: associates with HIF1A, recognizes and binds the VEGFA promoter, which is different from canonical E2 recognition site, and activates expression of the VEGFA gene. Acts as a negative regulator of keratinocyte differentiation. This chain is Transcription factor E2F7 (E2f7), found in Rattus norvegicus (Rat).